The following is a 127-amino-acid chain: Promotilin (127 aa).

An N-terminal signal peptide occupies residues 1 to 25 (MLSRKAVAALLLVHVTAMLASQTEG). The segment at 41-67 (REQNKRLRKSLRVQQRSKAAGRLEPQE) is disordered.

This sequence belongs to the motilin family. In terms of tissue distribution, present in the gut mucosa with the exception of the gastric corpus. Also present in medulla oblongata, nucleus of the solitary tract, hypophysis, spinal cord, hypothalamus, and cerebellum but not in the cerebral cortex.

The protein localises to the secreted. Its function is as follows. Plays an important role in the regulation of interdigestive gastrointestinal motility and indirectly causes rhythmic contraction of duodenal and colonic smooth muscle. The chain is Promotilin (MLN) from Cavia porcellus (Guinea pig).